A 413-amino-acid polypeptide reads, in one-letter code: Alpha-1-antitrypsin 1-1 (413 aa).

A signal peptide spans 1–24; sequence MTPSISWGLLLLAGLCCLVPSFLA. 3 N-linked (GlcNAc...) asparagine glycosylation sites follow: asparagine 64, asparagine 101, and asparagine 265. The segment at 368–387 is RCL; sequence AVTVLQMVPMSMPPILRFDH.

This sequence belongs to the serpin family.

Its subcellular location is the secreted. In terms of biological role, inhibitor of serine proteases. Its primary target is elastase, but it also has a moderate affinity for plasmin and thrombin. This chain is Alpha-1-antitrypsin 1-1 (Serpina1a), found in Mus musculus (Mouse).